The chain runs to 199 residues: MQEFKQHTGLAVPLDSANVDTDQIIPKQFLQRVSKLGFGQNLFHDWRFLDEAGTQPNPEFVLNFPRYKGASILLARENFGNGSSREHAPWALADYGLKAVIAPSFADIFYGNSLNNGLLVVRLKDDEVDALFKLVEANEGQNITVDLEAKEVRAADYCFKFEIDDFRRYCIMNGLDNIGLTLQHADAIDAYEAKQPVWL.

Belongs to the LeuD family. LeuD type 1 subfamily. In terms of assembly, heterodimer of LeuC and LeuD.

It catalyses the reaction (2R,3S)-3-isopropylmalate = (2S)-2-isopropylmalate. It functions in the pathway amino-acid biosynthesis; L-leucine biosynthesis; L-leucine from 3-methyl-2-oxobutanoate: step 2/4. Its function is as follows. Catalyzes the isomerization between 2-isopropylmalate and 3-isopropylmalate, via the formation of 2-isopropylmaleate. The protein is 3-isopropylmalate dehydratase small subunit of Tolumonas auensis (strain DSM 9187 / NBRC 110442 / TA 4).